A 261-amino-acid chain; its full sequence is Antiviral protein S (261 aa).

Disulfide bonds link cysteine 34–cysteine 258 and cysteine 84–cysteine 105. Glutamate 175 is a catalytic residue.

This sequence belongs to the ribosome-inactivating protein family. Type 1 RIP subfamily.

The catalysed reaction is Endohydrolysis of the N-glycosidic bond at one specific adenosine on the 28S rRNA.. Functionally, inhibits viral infection of plants, and protein synthesis in vitro. In Phytolacca americana (American pokeweed), this protein is Antiviral protein S.